Consider the following 59-residue polypeptide: UPF0434 protein Rsph17025_2896 (59 aa).

The protein belongs to the UPF0434 family.

The polypeptide is UPF0434 protein Rsph17025_2896 (Cereibacter sphaeroides (strain ATCC 17025 / ATH 2.4.3) (Rhodobacter sphaeroides)).